The chain runs to 1294 residues: CLIP-associating protein 2 (1294 aa).

The disordered stretch occupies residues 1 to 61 (MAMGDDKSFD…KVGGASKEGG (61 aa)). Phosphoserine occurs at positions 8 and 14. The segment covering 47 to 61 (SAGGPKVGGASKEGG) has biased composition (gly residues). The tract at residues 60–311 (GGAGAVDEDD…KSLQTYLKSS (252 aa)) is TOG 1. HEAT repeat units follow at residues 173 to 208 (HGAE…IRHT), 209 to 245 (HVPR…EWQT), and 250 to 287 (RHAA…HFPG). Residues 314–368 (VASLPQSDRSSSSSQESLNRPFSSKWSTANPSTVAGRVSAGSSKASSLPGSLQRS) form a disordered region. A phosphoserine mark is found at S316, S327, and S330. Residues 316 to 334 (SLPQSDRSSSSSQESLNRP) are compositionally biased toward low complexity. Polar residues-rich tracts occupy residues 335-346 (FSSKWSTANPST) and 353-367 (AGSS…SLQR). Residues S360, S368, S370, and S407 each carry the phosphoserine modification. The segment at 409 to 467 (EDTSDKLDGTASEDGRVRAKLSAPLAGMGNAKADSRGRSRTKMVSQSQPGSRSGSPGRV) is disordered. Over residues 411 to 425 (TSDKLDGTASEDGRV) the composition is skewed to basic and acidic residues. The tract at residues 444–580 (RGRSRTKMVS…GPGYGISQSS (137 aa)) is interaction with microtubules, MAPRE1 and MAPRE3. The segment covering 453-467 (SQSQPGSRSGSPGRV) has biased composition (low complexity). A phosphoserine mark is found at S455, S459, S463, S478, and S489. Residues 488–557 (ASAQKRSKIP…PLASRHHSRS (70 aa)) are disordered. The SXIP motif 1; mediates interaction with MAPRE1 and targeting to microtubule plus ends motif lies at 494–497 (SKIP). S507 bears the Phosphoserine mark. The SXIP motif 2; mediates interaction with MAPRE1 and targeting to microtubule plus ends signature appears at 517 to 520 (SRIP). Phosphoserine is present on residues S525, S529, S585, S587, S596, S621, and S627. Positions 617 to 645 (YGMHSDDDANSDASSACSERSYSSRNGSI) are disordered. The segment covering 627–641 (SDASSACSERSYSSR) has biased composition (low complexity). Residues 649-881 (MRQTEDVAEV…TKLLHNHLRN (233 aa)) form a TOG 2 region. HEAT repeat units follow at residues 710-747 (RVFS…KMGA) and 772-809 (LQFN…QMDP). T787 is modified (phosphothreonine). The interaction with RSN and localization to the Golgi and kinetochores stretch occupies residues 872–1294 (TKLLHNHLRN…DPTTDVSGQS (423 aa)). Disordered stretches follow at residues 878–928 (HLRN…FDYD) and 952–995 (SFRS…DSSQ). 2 stretches are compositionally biased toward polar residues: residues 880 to 892 (RNTG…SMGS) and 901 to 922 (SPAN…TLSP). S892 is modified (phosphoserine). S952, S955, S1013, and S1029 each carry phosphoserine. A compositionally biased stretch (basic and acidic residues) spans 955–972 (SQEDMNEPLKRDSKKDDG). Residues 1017–1294 (RDYNPYNYSD…DPTTDVSGQS (278 aa)) form a required for cortical localization region. 3 HEAT repeats span residues 1054–1091 (LDHS…TQEE), 1098–1135 (EHFK…HQPA), and 1216–1253 (LLLP…VIGD).

Belongs to the CLASP family. Interacts with microtubules. Interacts with MAPRE1; probably required for targeting to the growing microtubule plus ends. Interacts with CLIP2, ERC1, MAPRE3, PHLDB2 and RSN. The interaction with ERC1 may be mediated by PHLDB2. Interacts with GCC2; recruits CLASP2 to Golgi membranes. Interacts with MACF1. Interacts with mtcl2 and MTCL1. In terms of processing, phosphorylated by GSK3B. Phosphorylation reduces MAPRE1 binding. Phosphorylation by GSK3B may negatively regulate binding to microtubule lattices in lamella. Brain-specific.

The protein resides in the cytoplasm. Its subcellular location is the cytoskeleton. It localises to the microtubule organizing center. It is found in the centrosome. The protein localises to the chromosome. The protein resides in the centromere. Its subcellular location is the kinetochore. It localises to the spindle. It is found in the golgi apparatus. The protein localises to the trans-Golgi network. The protein resides in the cell membrane. Its subcellular location is the cell projection. It localises to the ruffle membrane. It is found in the cell cortex. Microtubule plus-end tracking protein that promotes the stabilization of dynamic microtubules. Involved in the nucleation of noncentrosomal microtubules originating from the trans-Golgi network (TGN). Required for the polarization of the cytoplasmic microtubule arrays in migrating cells towards the leading edge of the cell. May act at the cell cortex to enhance the frequency of rescue of depolymerizing microtubules by attaching their plus-ends to cortical platforms composed of ERC1 and PHLDB2. This cortical microtubule stabilizing activity is regulated at least in part by phosphatidylinositol 3-kinase signaling. Also performs a similar stabilizing function at the kinetochore which is essential for the bipolar alignment of chromosomes on the mitotic spindle. Acts as a mediator of ERBB2-dependent stabilization of microtubules at the cell cortex. In Homo sapiens (Human), this protein is CLIP-associating protein 2 (CLASP2).